The chain runs to 412 residues: NADH-quinone oxidoreductase subunit D (412 aa).

It belongs to the complex I 49 kDa subunit family. NDH-1 is composed of 14 different subunits. Subunits NuoB, C, D, E, F, and G constitute the peripheral sector of the complex.

Its subcellular location is the cell inner membrane. The enzyme catalyses a quinone + NADH + 5 H(+)(in) = a quinol + NAD(+) + 4 H(+)(out). Its function is as follows. NDH-1 shuttles electrons from NADH, via FMN and iron-sulfur (Fe-S) centers, to quinones in the respiratory chain. The immediate electron acceptor for the enzyme in this species is believed to be ubiquinone. Couples the redox reaction to proton translocation (for every two electrons transferred, four hydrogen ions are translocated across the cytoplasmic membrane), and thus conserves the redox energy in a proton gradient. This is NADH-quinone oxidoreductase subunit D from Sulfurimonas denitrificans (strain ATCC 33889 / DSM 1251) (Thiomicrospira denitrificans (strain ATCC 33889 / DSM 1251)).